Consider the following 288-residue polypeptide: Transmembrane protein 163 (288 aa).

The segment covering 1–11 (MERAPGSERRS) has biased composition (basic and acidic residues). Residues 1 to 64 (MERAPGSERR…ESGQFSDGFE (64 aa)) form a disordered region. Over 1-87 (MERAPGSERR…HEAQNYRKKA (87 aa)) the chain is Cytoplasmic. At Ser11 the chain carries Phosphoserine. Pro residues predominate over residues 12-24 (PPGPGVPRPPPRG). Over residues 25 to 42 (HAPSTAAPAPNPAPLSSS) the composition is skewed to low complexity. Positions 41–71 (SSMQPDEERQPRISESGQFSDGFEDRGLLES) are required for interaction with MCOLN1. Phosphoserine is present on residues Ser54, Ser56, and Ser60. The chain crosses the membrane as a helical span at residues 88–108 (LWVSWLSIIVTLALAVAAFTV). Over 109 to 115 (SVMRYSA) the chain is Extracellular. Residues 116-136 (SAFGFAFDAILDVLSSAIVLW) form a helical membrane-spanning segment. Topologically, residues 137 to 149 (RYSNAAAVHSAHR) are cytoplasmic. Residues 150–170 (EYIACVILGVIFLLSSICIVV) traverse the membrane as a helical segment. The Extracellular segment spans residues 171 to 186 (KAIHDLSTRLLPEVDD). Residues 187-207 (FLFSVSILSGILCSVLAVLKF) traverse the membrane as a helical segment. The Cytoplasmic portion of the chain corresponds to 208–216 (MLGKVLTSR). The chain crosses the membrane as a helical span at residues 217–237 (ALITDGFNSLVGGVMGFSILL). At 238-254 (SAEVFKHNAAVWYLDGS) the chain is on the extracellular side. A helical membrane pass occupies residues 255-275 (IGVLIGLTIFAYGVKLLIDMV). At 276–288 (PRVRQTRHYEMFE) the chain is on the cytoplasmic side.

The protein belongs to the TMEM163 family. As to quaternary structure, homodimer. Interacts with MCOLN1. Interacts with SLC30A1, SLC30A2, SLC30A3 and SLC30A4. As to expression, strongly expressed in brain. Also detected in lung, liver, kidney and spleen. Mainly expressed in the glutaminergic neuron subpopulations.

It is found in the cytoplasmic vesicle. The protein localises to the secretory vesicle. It localises to the synaptic vesicle membrane. The protein resides in the early endosome membrane. Its subcellular location is the late endosome membrane. It is found in the lysosome membrane. The protein localises to the cell membrane. The catalysed reaction is Zn(2+)(in) = Zn(2+)(out). Functionally, zinc ion transporter that mediates zinc efflux and plays a crucial role in intracellular zinc homeostasis. Binds the divalent cations Zn(2+), Ni(2+), and to a minor extent Cu(2+). Is a functional modulator of P2X purinoceptors, including P2RX1, P2RX3, P2RX4 and P2RX7. Plays a role in central nervous system development and is required for myelination, and survival and proliferation of oligodendrocytes. This is Transmembrane protein 163 (Tmem163) from Rattus norvegicus (Rat).